We begin with the raw amino-acid sequence, 276 residues long: Short-chain dehydrogenase anuF (276 aa).

NADP(+) is bound by residues Ile-18, Asp-68, Lys-130, Tyr-176, Lys-180, Val-209, and Thr-211. Catalysis depends on Tyr-176, which acts as the Proton acceptor. The Proton donor role is filled by Tyr-176. Lys-180 acts as the Lowers pKa of active site Tyr in catalysis.

It belongs to the short-chain dehydrogenases/reductases (SDR) family.

The enzyme catalyses (2R,9S)-annullatin H + A = (2R)-annullatin F + AH2. Functionally, cytochrome P450 monooxygenase; part of the gene cluster that mediates the biosynthesis of annullatin D, an alkylated aromatic polyketide with a fused dihydrobenzofuran lactone ring system that exhibits potent agonistic activities toward the cannabinoid receptors. Within the pathway, anuF is involved in the formation of (2R)-annullatin F from the diastereomer of (2S,9S)-annullatin H (compound 12). The annullatin backbone 2-hydroxymethyl-3-pentylphenol is assembled from one acetyl-CoA starter unit and 5 malonyl-CoA elongation units by cooperation of the highly reducing polyketide synthase anuA, the short-chain dehydrogenase anuB and the oxidoreductase anuC, before being hydroxylated at the C-5 alkyl chain by the cytochrome P450 monooxygenase anuE to form (8S)-annullatin E. The prenyltransferase anuH subsequently installs one isoprenyl group at the benzene ring to form (8S)-annullatin J. Enzymatic or nonenzymatic dihydro-benzofuran ring formation between the prenyl and the phenolic hydroxyl groups in (8S)-annullatin J results in two diastereomers (2S,9S)-annullatin H and compound 12. The intermediate (2S,9S)-annullatin H is then converted to (2S,9S)-annullatin D by the FAD-linked oxidoreductase anuG-catalyzed five-member lactone ring formation. The isomer 12 acts as a substrate for the short-chain dehydrogenase anuF and is oxidized to (2R)-annullatin F, which is subsequently acetylated by an acetyltransferase leading to (2R)-annullatin G formation. The remaining enzymes identified within the cluster, anuD, anuI and anuJ, seem not to be involved in annullatin biosynthesis. This chain is Short-chain dehydrogenase anuF, found in Penicillium roqueforti (strain FM164).